The primary structure comprises 488 residues: UDP-N-acetylmuramate--L-alanine ligase (488 aa).

Position 126 to 132 (126 to 132 (GTHGKTT)) interacts with ATP.

It belongs to the MurCDEF family.

The protein localises to the cytoplasm. It carries out the reaction UDP-N-acetyl-alpha-D-muramate + L-alanine + ATP = UDP-N-acetyl-alpha-D-muramoyl-L-alanine + ADP + phosphate + H(+). Its pathway is cell wall biogenesis; peptidoglycan biosynthesis. Its function is as follows. Cell wall formation. In Cronobacter sakazakii (strain ATCC BAA-894) (Enterobacter sakazakii), this protein is UDP-N-acetylmuramate--L-alanine ligase.